Here is a 750-residue protein sequence, read N- to C-terminus: Ribosomal RNA large subunit methyltransferase K/L (750 aa).

The THUMP domain maps to 46-157; the sequence is TAYRLCLWSR…RGEAILSLDL (112 aa).

It belongs to the methyltransferase superfamily. RlmKL family.

Its subcellular location is the cytoplasm. It carries out the reaction guanosine(2445) in 23S rRNA + S-adenosyl-L-methionine = N(2)-methylguanosine(2445) in 23S rRNA + S-adenosyl-L-homocysteine + H(+). It catalyses the reaction guanosine(2069) in 23S rRNA + S-adenosyl-L-methionine = N(2)-methylguanosine(2069) in 23S rRNA + S-adenosyl-L-homocysteine + H(+). Functionally, specifically methylates the guanine in position 2445 (m2G2445) and the guanine in position 2069 (m7G2069) of 23S rRNA. The sequence is that of Ribosomal RNA large subunit methyltransferase K/L from Pseudomonas savastanoi pv. phaseolicola (strain 1448A / Race 6) (Pseudomonas syringae pv. phaseolicola (strain 1448A / Race 6)).